Consider the following 204-residue polypeptide: Large ribosomal subunit protein uL4 (204 aa).

A disordered region spans residues 49 to 75 (TKGRSDVSGGGKKPWRQKGRGGARAGS).

It belongs to the universal ribosomal protein uL4 family. In terms of assembly, part of the 50S ribosomal subunit.

Its function is as follows. One of the primary rRNA binding proteins, this protein initially binds near the 5'-end of the 23S rRNA. It is important during the early stages of 50S assembly. It makes multiple contacts with different domains of the 23S rRNA in the assembled 50S subunit and ribosome. Functionally, forms part of the polypeptide exit tunnel. In Campylobacter jejuni (strain RM1221), this protein is Large ribosomal subunit protein uL4.